We begin with the raw amino-acid sequence, 286 residues long: 33 kDa chaperonin (286 aa).

Cystine bridges form between Cys-225–Cys-227 and Cys-258–Cys-261.

The protein belongs to the HSP33 family. Post-translationally, under oxidizing conditions two disulfide bonds are formed involving the reactive cysteines. Under reducing conditions zinc is bound to the reactive cysteines and the protein is inactive.

Its subcellular location is the cytoplasm. Its function is as follows. Redox regulated molecular chaperone. Protects both thermally unfolding and oxidatively damaged proteins from irreversible aggregation. Plays an important role in the bacterial defense system toward oxidative stress. This is 33 kDa chaperonin from Shewanella loihica (strain ATCC BAA-1088 / PV-4).